The sequence spans 641 residues: Tetracycline resistance protein TetQ (641 aa).

The tr-type G domain occupies 1 to 244 (MNIINLGILA…AITSFILPPA (244 aa)). GTP-binding positions include 10–17 (AHIDAGKT), 74–78 (DTPGH), and 128–131 (NKID).

Belongs to the TRAFAC class translation factor GTPase superfamily. Classic translation factor GTPase family. TetM/TetO subfamily.

Functionally, abolishes the inhibitory effect of tetracyclin on protein synthesis by a non-covalent modification of the ribosomes. The chain is Tetracycline resistance protein TetQ (tetQ) from Xylanibacter ruminicola (Prevotella ruminicola).